A 508-amino-acid chain; its full sequence is UDP-N-acetylmuramoyl-L-alanyl-D-glutamate--2,6-diaminopimelate ligase (508 aa).

A UDP-N-acetyl-alpha-D-muramoyl-L-alanyl-D-glutamate-binding site is contributed by S33. ATP is bound at residue 121-127 (GTNGKST). Residues N162, 163 to 164 (TT), S190, Q196, and R198 contribute to the UDP-N-acetyl-alpha-D-muramoyl-L-alanyl-D-glutamate site. An N6-carboxylysine modification is found at K230. Meso-2,6-diaminopimelate contacts are provided by residues R399, 423-426 (DNPR), G474, and E478. The short motif at 423–426 (DNPR) is the Meso-diaminopimelate recognition motif element.

This sequence belongs to the MurCDEF family. MurE subfamily. Mg(2+) serves as cofactor. In terms of processing, carboxylation is probably crucial for Mg(2+) binding and, consequently, for the gamma-phosphate positioning of ATP.

It localises to the cytoplasm. It catalyses the reaction UDP-N-acetyl-alpha-D-muramoyl-L-alanyl-D-glutamate + meso-2,6-diaminopimelate + ATP = UDP-N-acetyl-alpha-D-muramoyl-L-alanyl-gamma-D-glutamyl-meso-2,6-diaminopimelate + ADP + phosphate + H(+). It functions in the pathway cell wall biogenesis; peptidoglycan biosynthesis. Functionally, catalyzes the addition of meso-diaminopimelic acid to the nucleotide precursor UDP-N-acetylmuramoyl-L-alanyl-D-glutamate (UMAG) in the biosynthesis of bacterial cell-wall peptidoglycan. The polypeptide is UDP-N-acetylmuramoyl-L-alanyl-D-glutamate--2,6-diaminopimelate ligase (Buchnera aphidicola subsp. Baizongia pistaciae (strain Bp)).